Here is a 369-residue protein sequence, read N- to C-terminus: ATP-dependent (S)-NAD(P)H-hydrate dehydratase (369 aa).

The YjeF C-terminal domain maps to 14–356 (LFQKARKLVP…DEVHESFLTL (343 aa)). (6S)-NADPHX-binding positions include Gly126 and 179-185 (NVNEFSR). ATP contacts are provided by residues 231–235 (KGPHD) and 250–259 (GGLKRSGGQG). A (6S)-NADPHX-binding site is contributed by Asp260. The segment covering 284–306 (GEQEHSKEAENKEEVQGELESNK) has biased composition (basic and acidic residues). The segment at 284 to 307 (GEQEHSKEAENKEEVQGELESNKR) is disordered.

It belongs to the NnrD/CARKD family. Mg(2+) is required as a cofactor.

It is found in the cytoplasm. It catalyses the reaction (6S)-NADHX + ATP = ADP + phosphate + NADH + H(+). The enzyme catalyses (6S)-NADPHX + ATP = ADP + phosphate + NADPH + H(+). Its function is as follows. Catalyzes the dehydration of the S-form of NAD(P)HX at the expense of ATP, which is converted to ADP. Together with NAD(P)HX epimerase, which catalyzes the epimerization of the S- and R-forms, the enzyme allows the repair of both epimers of NAD(P)HX, a damaged form of NAD(P)H that is a result of enzymatic or heat-dependent hydration. The chain is ATP-dependent (S)-NAD(P)H-hydrate dehydratase from Emericella nidulans (strain FGSC A4 / ATCC 38163 / CBS 112.46 / NRRL 194 / M139) (Aspergillus nidulans).